The primary structure comprises 756 residues: Protein O-mannosyl-transferase 2 (756 aa).

7 helical membrane-spanning segments follow: residues 64–84, 110–130, 156–176, 179–199, 203–223, 245–265, and 293–313; these read AHVPVFILALVIVLSVSTRFY, TFFFDVHPPLGKMLIGLAGYL, AFCAALGSCLPPFAFLVVLEL, SSTAALIAASLLIFDTGCITL, ILLDPILMFFIMGSVLCMVKF, CLSGSLGVKFVGLFVILLVGI, and VFGLIMLPLFLYTTIFAIHFI. MIR domains follow at residues 344-400, 410-466, and 471-528; these read PEYL…VKRL, PELV…VEVC, and GDPV…IEDH. 4 helical membrane-spanning segments follow: residues 602 to 622, 643 to 663, 672 to 692, and 713 to 733; these read PVIWWLNLLSLALFVILLTVA, LMEGGGMLFLGWLLHYLPFYI, HYFPAMMFSSMLTGITLDILL, and SVLLLGFIYSFYLFHPLSYGM.

The protein belongs to the glycosyltransferase 39 family. As to expression, widely expressed. Has particularly strong expression in ovary, testis, liver, brain, muscle, heart and eye.

Its subcellular location is the endoplasmic reticulum membrane. The catalysed reaction is a di-trans,poly-cis-dolichyl beta-D-mannosyl phosphate + L-seryl-[protein] = 3-O-(alpha-D-mannosyl)-L-seryl-[protein] + a di-trans,poly-cis-dolichyl phosphate + H(+). It catalyses the reaction a di-trans,poly-cis-dolichyl beta-D-mannosyl phosphate + L-threonyl-[protein] = 3-O-(alpha-D-mannosyl)-L-threonyl-[protein] + a di-trans,poly-cis-dolichyl phosphate + H(+). It participates in protein modification; protein glycosylation. Its function is as follows. Transfers mannosyl residues to the hydroxyl group of serine or threonine residues. Coexpression of both POMT1 and POMT2 is necessary for enzyme activity, expression of either POMT1 or POMT2 alone is insufficient. This is Protein O-mannosyl-transferase 2 from Danio rerio (Zebrafish).